The primary structure comprises 225 residues: Lipoprotein CseA (225 aa).

Positions 1–36 are cleaved as a signal peptide; the sequence is MRGLTDGRTPRGTRRTTQAASTAVAVFVALGVSLAG. The N-palmitoyl cysteine moiety is linked to residue Cys-37. A lipid anchor (S-diacylglycerol cysteine) is attached at Cys-37. Disordered regions lie at residues 40–77 and 205–225; these read GGTG…APDR and THND…EPDS. Over residues 60 to 73 the composition is skewed to low complexity; sequence SASPAPAAKASPSK.

The protein resides in the cell membrane. May be involved in the stabilization of the cell envelope or may interact with the sensor protein CseC to modulate its activity, in response to cell envelope stress. The polypeptide is Lipoprotein CseA (cseA) (Streptomyces coelicolor (strain ATCC BAA-471 / A3(2) / M145)).